The following is a 214-amino-acid chain: ATP-dependent Clp protease proteolytic subunit (214 aa).

Ser110 (nucleophile) is an active-site residue. The active site involves His135.

It belongs to the peptidase S14 family. As to quaternary structure, fourteen ClpP subunits assemble into 2 heptameric rings which stack back to back to give a disk-like structure with a central cavity, resembling the structure of eukaryotic proteasomes.

The protein localises to the cytoplasm. It carries out the reaction Hydrolysis of proteins to small peptides in the presence of ATP and magnesium. alpha-casein is the usual test substrate. In the absence of ATP, only oligopeptides shorter than five residues are hydrolyzed (such as succinyl-Leu-Tyr-|-NHMec, and Leu-Tyr-Leu-|-Tyr-Trp, in which cleavage of the -Tyr-|-Leu- and -Tyr-|-Trp bonds also occurs).. Its function is as follows. Cleaves peptides in various proteins in a process that requires ATP hydrolysis. Has a chymotrypsin-like activity. Plays a major role in the degradation of misfolded proteins. This Legionella pneumophila (strain Corby) protein is ATP-dependent Clp protease proteolytic subunit.